The following is a 363-amino-acid chain: 3-isopropylmalate dehydrogenase (363 aa).

78 to 89 (GPKWGTGAVRPE) is a binding site for NAD(+). Positions 96, 106, 135, and 224 each coordinate substrate. D224, D249, and D253 together coordinate Mg(2+). Position 288–299 (288–299 (GSAPDLPANKVN)) interacts with NAD(+).

This sequence belongs to the isocitrate and isopropylmalate dehydrogenases family. Homodimer. Mg(2+) is required as a cofactor. It depends on Mn(2+) as a cofactor.

It localises to the cytoplasm. The enzyme catalyses (2R,3S)-3-isopropylmalate + NAD(+) = 4-methyl-2-oxopentanoate + CO2 + NADH. The protein operates within amino-acid biosynthesis; L-leucine biosynthesis; L-leucine from 3-methyl-2-oxobutanoate: step 3/4. Catalyzes the oxidation of 3-carboxy-2-hydroxy-4-methylpentanoate (3-isopropylmalate) to 3-carboxy-4-methyl-2-oxopentanoate. The product decarboxylates to 4-methyl-2 oxopentanoate. The protein is 3-isopropylmalate dehydrogenase (LEU2) of Cyberlindnera jadinii (Torula yeast).